The following is a 173-amino-acid chain: Alpha-crystallin A chain (173 aa).

Met-1 carries the post-translational modification N-acetylmethionine. Residues 1–63 (MDVTIQHPWF…RTVLDSGISE (63 aa)) form a required for complex formation with BFSP1 and BFSP2 region. Gln-6 is modified (deamidated glutamine; partial). At Ser-45 the chain carries Phosphoserine. Gln-50 and Gln-90 each carry deamidated glutamine; partial. The region spanning 52–162 (LFRTVLDSGI…SHSERAIPVS (111 aa)) is the sHSP domain. An N6-acetyllysine modification is found at Lys-99. Zn(2+) is bound at residue His-100. Position 101 is a deamidated asparagine; partial (Asn-101). Zn(2+)-binding residues include Glu-102 and His-107. Phosphoserine is present on Ser-122. Position 123 is a deamidated asparagine; partial (Asn-123). Cys-131 and Cys-142 are oxidised to a cystine. Gln-147 is subject to Deamidated glutamine; partial. The disordered stretch occupies residues 149 to 173 (GMDASHSERAIPVSREEKPSSAPSS). Positions 153-167 (SHSERAIPVSREEKP) are enriched in basic and acidic residues. His-154 lines the Zn(2+) pocket. A glycan (O-linked (GlcNAc) serine) is linked at Ser-162.

Belongs to the small heat shock protein (HSP20) family. Heteromer composed of three CRYAA and one CRYAB subunits. Inter-subunit bridging via zinc ions enhances stability, which is crucial as there is no protein turn over in the lens. Can also form homodimers and homotetramers (dimers of dimers) which serve as the building blocks of homooligomers. Within homooligomers, the zinc-binding motif is created from residues of 3 different molecules. His-100 and Glu-102 from one molecule are ligands of the zinc ion, and His-107 and His-154 residues from additional molecules complete the site with tetrahedral coordination geometry. Part of a complex required for lens intermediate filament formation composed of BFSP1, BFSP2 and CRYAA. Post-translationally, undergoes age-dependent proteolytical cleavage at the C-terminus.

It localises to the cytoplasm. The protein resides in the nucleus. In terms of biological role, contributes to the transparency and refractive index of the lens. In its oxidized form (absence of intramolecular disulfide bond), acts as a chaperone, preventing aggregation of various proteins under a wide range of stress conditions. Required for the correct formation of lens intermediate filaments as part of a complex composed of BFSP1, BFSP2 and CRYAA. This is Alpha-crystallin A chain (CRYAA) from Loxodonta africana (African elephant).